A 497-amino-acid chain; its full sequence is L-arabinose isomerase (497 aa).

Mn(2+) is bound by residues glutamate 306, glutamate 331, histidine 348, and histidine 447.

It belongs to the arabinose isomerase family. It depends on Mn(2+) as a cofactor.

It carries out the reaction beta-L-arabinopyranose = L-ribulose. It functions in the pathway carbohydrate degradation; L-arabinose degradation via L-ribulose; D-xylulose 5-phosphate from L-arabinose (bacterial route): step 1/3. In terms of biological role, catalyzes the conversion of L-arabinose to L-ribulose. The polypeptide is L-arabinose isomerase (Halalkalibacterium halodurans (strain ATCC BAA-125 / DSM 18197 / FERM 7344 / JCM 9153 / C-125) (Bacillus halodurans)).